Reading from the N-terminus, the 1076-residue chain is Nucleoporin NUP1 (1076 aa).

Positions 1-11 are enriched in low complexity; that stretch reads MSSNTSSVMSS. The interval 1–39 is disordered; the sequence is MSSNTSSVMSSPRVEKRSFSSTLKSFFTNPNKKRPSSKK. Ser-2 is modified (N-acetylserine). Over residues 19 to 30 the composition is skewed to polar residues; sequence FSSTLKSFFTNP. Residues Ser-54 and Ser-161 each carry the phosphoserine modification. Disordered regions lie at residues 143–183 and 224–260; these read SQSK…TNVG and KKDN…ATGP. Polar residues-rich tracts occupy residues 154-170 and 243-260; these read LCTS…SCTR and NRNN…ATGP. An FXF 1 repeat occupies 336-338; it reads FDF. At Thr-381 the chain carries Phosphothreonine. A Phosphoserine modification is found at Ser-383. An FXF 2 repeat occupies 384-386; sequence FNF. Residues 403–518 are disordered; that stretch reads TTLFNFGGKS…SFVFGASDKQ (116 aa). FXFG repeat units lie at residues 406 to 409 and 422 to 425; these read FNFG and FKFG. Residues 426 to 439 are compositionally biased toward basic and acidic residues; the sequence is KTSEKSENHTESDA. FXFG repeat units follow at residues 448-451 and 484-487; these read FSFG and FDFG. The span at 488-505 shows a compositional bias: basic and acidic residues; sequence KTGDQKETKKGESEKDAS. FXFG repeat units follow at residues 510–513, 525–528, 543–546, and 571–574; these read FVFG and FTFG. The interval 548–743 is disordered; the sequence is AATAKETHTK…SMKSTASTAA (196 aa). FXF repeat units follow at residues 591-593, 614-616, 636-638, and 657-659; these read FSF and FTF. 2 stretches are compositionally biased toward polar residues: residues 634-649 and 658-667; these read PTFS…SSVV and TFASSKTSQP. The residue at position 637 (Ser-637) is a Phosphoserine. One copy of the FXFG 9 repeat lies at 671-674; the sequence is FSFG. Residues 689-691 form an FXF 7 repeat; the sequence is FSF. FXFG repeat units follow at residues 708–711 and 727–730; these read FTFG and FSFG. Positions 708-723 are enriched in low complexity; it reads FTFGGSTTNNTTTTST. One copy of the FXF 8 repeat lies at 753 to 755; sequence FSF. One copy of the FXFG 12 repeat lies at 800 to 803; the sequence is FSFG. 2 FXF repeats span residues 819 to 821 and 866 to 868; these read FSF and FGF. The stretch at 885–888 is one FXFG 13 repeat; it reads FNFG. One copy of the FXF 11 repeat lies at 929–931; it reads FNF. Positions 940–979 are disordered; that stretch reads GGSVFNMNGNTNANTVFAGSNNQPHQSQTPSFNTNSSFTP. Positions 944-964 are enriched in polar residues; that stretch reads FNMNGNTNANTVFAGSNNQPH. The span at 965 to 979 shows a compositional bias: low complexity; it reads QSQTPSFNTNSSFTP. 3 FG repeats span residues 1008-1009, 1027-1028, and 1038-1039; these read FG. Residues 1025–1054 form a disordered region; it reads SIFGGAGGVPTTSFGQPQSAPNQMGMGTNN. Residues 1034–1045 show a composition bias toward polar residues; that stretch reads PTTSFGQPQSAP. The segment at 1040 to 1076 is interaction with KAP95; that stretch reads QPQSAPNQMGMGTNNGMSMGGGVMANRKIARMRHSKR.

Component of the nuclear pore complex (NPC). NPC constitutes the exclusive means of nucleocytoplasmic transport. NPCs allow the passive diffusion of ions and small molecules and the active, nuclear transport receptor-mediated bidirectional transport of macromolecules such as proteins, RNAs, ribonucleoparticles (RNPs), and ribosomal subunits across the nuclear envelope. Due to its 8-fold rotational symmetry, all subunits are present with 8 copies or multiples thereof. Interacts through its FG repeats with nuclear transport receptors. Binds to the nuclear basket of the NPC through NUP60. Interacts with KAP122. Phosphorylated by CDC28.

The protein localises to the nucleus. The protein resides in the nuclear pore complex. Its subcellular location is the nucleus membrane. In terms of biological role, functions as a component of the nuclear pore complex (NPC). NPC components, collectively referred to as nucleoporins (NUPs), can play the role of both NPC structural components and of docking or interaction partners for transiently associated nuclear transport factors. Active directional transport is assured by both, a Phe-Gly (FG) repeat affinity gradient for these transport factors across the NPC and a transport cofactor concentration gradient across the nuclear envelope (GSP1 and GSP2 GTPases associated predominantly with GTP in the nucleus, with GDP in the cytoplasm). As one of the FG repeat nucleoporins NUP1 is involved in interactions with and guidance of nuclear transport receptors such as SRP1-KAP95 (importin alpha and beta) through the NPC. Like the closely related NUP2 it also plays an important role in disassembling and recycling SRP1-KAP95 to the cytoplasm after nuclear import. Upon entry of the heterotrimeric SRP1-KAP95-cargo complex in the nucleus, NUP1 binds through its C-terminus to KAP95, thus accelerating the release of KAP95 and, indirectly, of the nuclear localization signal (NLS)-containing cargo from the SRP1-KAP95-cargo complex. This chain is Nucleoporin NUP1 (NUP1), found in Saccharomyces cerevisiae (strain ATCC 204508 / S288c) (Baker's yeast).